A 403-amino-acid chain; its full sequence is S-adenosylmethionine synthase (403 aa).

His16 serves as a coordination point for ATP. Asp18 serves as a coordination point for Mg(2+). Glu44 contributes to the K(+) binding site. Residues Glu57 and Gln100 each coordinate L-methionine. Positions 100–110 (QSPDIAQGVDR) are flexible loop. Residues 106-126 (QGVDRSYESRSGSASTDAHDL) form a disordered region. ATP is bound by residues 176 to 178 (DGK), 248 to 249 (KF), Asp257, 263 to 264 (RK), Ala280, and Lys284. Asp257 contributes to the L-methionine binding site. Lys288 contributes to the L-methionine binding site.

The protein belongs to the AdoMet synthase family. As to quaternary structure, homotetramer; dimer of dimers. Requires Mg(2+) as cofactor. K(+) serves as cofactor.

The protein resides in the cytoplasm. It catalyses the reaction L-methionine + ATP + H2O = S-adenosyl-L-methionine + phosphate + diphosphate. The protein operates within amino-acid biosynthesis; S-adenosyl-L-methionine biosynthesis; S-adenosyl-L-methionine from L-methionine: step 1/1. Its function is as follows. Catalyzes the formation of S-adenosylmethionine (AdoMet) from methionine and ATP. The overall synthetic reaction is composed of two sequential steps, AdoMet formation and the subsequent tripolyphosphate hydrolysis which occurs prior to release of AdoMet from the enzyme. The chain is S-adenosylmethionine synthase from Clavibacter sepedonicus (Clavibacter michiganensis subsp. sepedonicus).